The following is a 1046-amino-acid chain: Phospholipase D zeta 2 (1046 aa).

In terms of domain architecture, PX spans P45 to S205. A PH domain is found at S215 to C343. A PLD phosphodiesterase 1 domain is found at Y472 to R499. Catalysis depends on residues H477, K479, and D484. Residues G653–P667 are compositionally biased toward basic and acidic residues. Residues G653–D677 form a disordered region. Residues S847–S874 form the PLD phosphodiesterase 2 domain. Residues H852, K854, and D859 contribute to the active site.

Belongs to the phospholipase D family. PXPH-PLD subfamily. Does not require Ca(2+) or any other cation for activity. is required as a cofactor. In terms of tissue distribution, expressed in seedlings, roots, leaves, stems and flowers. Highest expression in roots. Detected only in the meristematic regions up to 4 days after germination and then at later stages in all tissues.

The enzyme catalyses a 1,2-diacyl-sn-glycero-3-phosphocholine + H2O = a 1,2-diacyl-sn-glycero-3-phosphate + choline + H(+). Its function is as follows. Hydrolyzes glycerol-phospholipids at the terminal phosphodiesteric bond to generate phosphatidic acids (PA). Phosphatidylcholine-selective. Regulates vesicle trafficking and auxin responses. Required for the normal cycling of PIN-2 containing vesicles. Contributes to the supply of inorganic phosphorus for cell metabolism and diacylglycerol moieties for galactolipid synthesis in phosphorus-starved roots. Involved in root elongation during phosphate limitation. The sequence is that of Phospholipase D zeta 2 from Arabidopsis thaliana (Mouse-ear cress).